Consider the following 1493-residue polypeptide: Son of sevenless homolog (1493 aa).

A DH domain is found at 244-448 (TYESVAVDFL…ERVVGCVSDM (205 aa)). Residues 496-606 (ELEKDGDLGM…WMAVLVKVTT (111 aa)) form the PH domain. An N-terminal Ras-GEF domain is found at 656 to 824 (GIPVIKCGTV…TILALIEKRV (169 aa)). The Ras-GEF domain maps to 897-1164 (HPIEIGRQLT…YNKSLEIQPK (268 aa)). Disordered regions lie at residues 1067–1091 (KSPPHGAAGAQKQQKDDLKASDPEN), 1165–1248 (GLDT…DDAP), and 1263–1493 (HPKI…SSNK). Residues 1079–1088 (QQKDDLKASD) show a composition bias toward basic and acidic residues. Polar residues-rich tracts occupy residues 1208-1231 (HSQNSHSAPHAMSSQSSTVPNTPL) and 1279-1289 (SRANQSNSVSL). Residues 1308-1326 (STATSPTTLTTTTTPSSAG) show a composition bias toward low complexity. Residues 1350-1361 (LTPSRDNSSPSA) show a composition bias toward polar residues. The span at 1381-1400 (STSSDVSSSPSTSGSTSSAT) shows a compositional bias: low complexity. The segment covering 1402 to 1417 (ENQEQLRVIFDREESH) has biased composition (basic and acidic residues). The segment covering 1426 to 1435 (PLPPALPPPR) has biased composition (pro residues). Residues 1453 to 1464 (HNSNSPTLSSEQ) are compositionally biased toward polar residues.

As to quaternary structure, interacts with cmd-1 in the presence of Ca(2+).

Functionally, promotes the exchange of Ras-bound GDP by GTP. May regulate signaling pathways downstream of receptor tyrosine kinase, egl-15 and let-23. Required for larval and male spicule development, fluid homeostasis, vulva induction, spermatogenesis, and oogenesis by promoting meiosis prophase exit during oocyte maturation. Required for the delamination of G1 cell by promoting the loss of cell junctions and detachment from the excretory system during larval development. Plays a role in nicotinic acetylcholine receptor (nAChR)-mediated sensitivity to nicotine. Regulates synaptic levels of nAchR subunit lev-1 in the nerve cord. The protein is Son of sevenless homolog of Caenorhabditis elegans.